The sequence spans 70 residues: Melittin-N (70 aa).

An N-terminal signal peptide occupies residues 1–21 (MKFLVNVALVFMVVYISYIYA). The propeptide at 22–43 (APEPEPAPEPEAEADAEADPEA) is removed by a dipeptidylpeptidase. An N-formylglycine; partial modification is found at G44. Q69 carries the post-translational modification Glutamine amide.

Belongs to the melittin family. Monomer (in solution and for integration into membranes), homotetramer (in solution and potentially as a toroidal pore in membranes), and potenially homomultimer (as a toroidal pore in membranes). In terms of tissue distribution, expressed by the venom gland.

It is found in the secreted. It localises to the target cell membrane. Main toxin of bee venom with strong hemolytic activity and antimicrobial activity. It has enhancing effects on bee venom phospholipase A2 activity. This amphipathic toxin binds to negatively charged membrane surface and forms pore by inserting into lipid bilayers inducing the leakage of ions and molecules and the enhancement of permeability that ultimately leads to cell lysis. It acts as a voltage-gated pore with higher selectivity for anions over cations. The ion conductance has been shown to be voltage-dependent. Self-association of melittin in membranes is promoted by high ionic strength, but not by the presence of negatively charged lipids. In vivo, intradermal injection into healthy human volunteers produce sharp pain sensation and an inflammatory response. It produces pain by activating primary nociceptor cells directly and indirectly due to its ability to activate plasma membrane phospholipase A2 and its pore-forming activity. Shows lower cytotoxicity when tested on E.coli and cancer cell lines than melittin, as well as lower anti-inflammatory properties and lower properties to interact to small unilamellar liposomes. The protein is Melittin-N (MELT) of Apis cerana (Indian honeybee).